A 342-amino-acid chain; its full sequence is Eukaryotic translation initiation factor 3 subunit F (342 aa).

Positions 30-166 constitute an MPN domain; sequence VAIQPQAVFS…SRTYISAPIG (137 aa). Residues 310 to 342 are disordered; sequence TDALAGDGQKDGGDRKQGGDRRNKGRQQRTQEA. Basic and acidic residues predominate over residues 317–331; it reads GQKDGGDRKQGGDRR.

It belongs to the eIF-3 subunit F family. As to quaternary structure, component of the eukaryotic translation initiation factor 3 (eIF-3) complex.

It localises to the cytoplasm. In terms of biological role, component of the eukaryotic translation initiation factor 3 (eIF-3) complex, which is involved in protein synthesis of a specialized repertoire of mRNAs and, together with other initiation factors, stimulates binding of mRNA and methionyl-tRNAi to the 40S ribosome. The eIF-3 complex specifically targets and initiates translation of a subset of mRNAs involved in cell proliferation. The protein is Eukaryotic translation initiation factor 3 subunit F of Phaeosphaeria nodorum (strain SN15 / ATCC MYA-4574 / FGSC 10173) (Glume blotch fungus).